The sequence spans 321 residues: uncharacterized protein (321 aa).

The next 9 helical transmembrane spans lie at 12-32 (IGVE…WAAT), 52-72 (LITS…AFLV), 86-106 (ILMS…ILII), 109-129 (LTGL…QQWF), 136-156 (FVIS…LVLA), 168-188 (DSLS…LFVG), 214-234 (WGMI…FTFL), 254-274 (KEIP…GLFF), and 292-312 (IFIC…QIFA).

Its subcellular location is the cell membrane. This is an uncharacterized protein from Campylobacter jejuni subsp. jejuni serotype O:2 (strain ATCC 700819 / NCTC 11168).